Consider the following 268-residue polypeptide: Tryptophan synthase alpha chain (268 aa).

Residues Glu-49 and Asp-60 each act as proton acceptor in the active site.

Belongs to the TrpA family. In terms of assembly, tetramer of two alpha and two beta chains.

The catalysed reaction is (1S,2R)-1-C-(indol-3-yl)glycerol 3-phosphate + L-serine = D-glyceraldehyde 3-phosphate + L-tryptophan + H2O. Its pathway is amino-acid biosynthesis; L-tryptophan biosynthesis; L-tryptophan from chorismate: step 5/5. Its function is as follows. The alpha subunit is responsible for the aldol cleavage of indoleglycerol phosphate to indole and glyceraldehyde 3-phosphate. This is Tryptophan synthase alpha chain from Xanthomonas axonopodis pv. citri (strain 306).